Reading from the N-terminus, the 1559-residue chain is Fatty acid synthase alpha subunit stcJ (1559 aa).

In terms of domain architecture, Carrier spans aspartate 68–proline 147. Serine 106 is modified (O-(pantetheine 4'-phosphoryl)serine). Positions asparagine 457 to threonine 693 are ketoreductase (KR) domain. Positions arginine 873 to histidine 1327 constitute a Ketosynthase family 3 (KS3) domain. The active-site For beta-ketoacyl synthase activity is the cysteine 1058. Residues valine 1105 to glutamate 1117 are compositionally biased toward basic and acidic residues. The interval valine 1105–serine 1125 is disordered. Residues histidine 1212 and histidine 1253 each act as for beta-ketoacyl synthase activity in the active site. Residue aspartate 1432 coordinates Mg(2+). Acetyl-CoA-binding positions include aspartate 1432 to valine 1434, glutamate 1480 to serine 1490, arginine 1504 to glutamine 1506, and leucine 1532 to tyrosine 1534. Serine 1533 contributes to the Mg(2+) binding site.

Belongs to the thiolase-like superfamily. Fungal fatty acid synthetase subunit alpha family. As to quaternary structure, [Alpha(6)beta(6)] hexamers of two multifunctional subunits (alpha and beta).

It carries out the reaction acetyl-CoA + n malonyl-CoA + 2n NADPH + 4n H(+) = a long-chain-acyl-CoA + n CoA + n CO2 + 2n NADP(+).. The enzyme catalyses a fatty acyl-[ACP] + malonyl-[ACP] + H(+) = a 3-oxoacyl-[ACP] + holo-[ACP] + CO2. The catalysed reaction is a (3R)-hydroxyacyl-[ACP] + NADP(+) = a 3-oxoacyl-[ACP] + NADPH + H(+). It functions in the pathway mycotoxin biosynthesis; sterigmatocystin biosynthesis. Its function is as follows. Fatty acid synthase alpha subunit; part of the gene cluster that mediates the biosynthesis of sterigmatocystin (ST), a polyketide-derived furanocoumarin which is part of the most toxic and carcinogenic compounds among the known mycotoxins. The first step in the biosynthesis of sterigmatocystin is the production of hexanoate by the fatty acid synthase (FAS) units stcJ and stcK. The polyketide backbone is assembled by the non-reducing polyketide synthase stcA by condensation of the starter hexanoyl-CoA and 7 malonyl-CoA extender units followed by cyclization and release of norsolorinic acid. Norsolorinic acid is the first stable intermediate in the biosynthesis of sterigmatocystin and is converted into averantin (AVN) by the ketoreductase stcE which reduces the hexanoate ketone to an alcohol. Averantin is then oxidized into 5'-hydroxyaverantin (HAVN) by the cytochrome P450 monooxygenase stcF. 5'-hydroxyaverantin is further converted to 5'-oxyaverantin (OAVN) by the 5'-hydroxyaverantin dehydrogenase stcG. The next step is the conversion of OAVN into averufin (AVF) which is catalyzed by a yet to be identified enzyme. The cytochrome P450 monooxygenase stcB and the flavin-binding monooxygenase stcW are both required for the conversion of averufin to 1-hydroxyversicolorone. The esterase stcI probably catalyzes the formation of versiconal hemiacetal acetate from 1-hydroxyversicolorone. The oxydoreductase stcN then probably catalyzes the biosynthetic step from versiconal to versicolorin B (VERB). The next step is performed by the versicolorin B desaturase stcL to produce versicolorin A (VERA). The ketoreductase stcU and the cytochrome P450 monooxygenase stcS are involved in the conversion of versicolorin A to demethylsterigmatocystin. The Baeyer-Villiger oxidas stcQ and the reductase stcR might be involved in the biosynthetic step from versicolorin A to demethylsterigmatocystin. The final step in the biosynthesis of sterigmatocystin is the methylation of demethylsterigmatocystin catalyzed by the methyltransferase stcP. This chain is Fatty acid synthase alpha subunit stcJ, found in Emericella nidulans (strain FGSC A4 / ATCC 38163 / CBS 112.46 / NRRL 194 / M139) (Aspergillus nidulans).